The primary structure comprises 150 residues: UPF0178 protein Sbal_1771 (150 aa).

The protein belongs to the UPF0178 family.

This Shewanella baltica (strain OS155 / ATCC BAA-1091) protein is UPF0178 protein Sbal_1771.